The primary structure comprises 282 residues: Biotin synthase (282 aa).

Residues 1–228 (MQEIFLCSIS…NARLMAAGGR (228 aa)) enclose the Radical SAM core domain. Residues Cys-17, Cys-21, and Cys-24 each contribute to the [4Fe-4S] cluster site. Positions 61, 96, 154, and 221 each coordinate [2Fe-2S] cluster.

It belongs to the radical SAM superfamily. Biotin synthase family. Homodimer. [4Fe-4S] cluster serves as cofactor. It depends on [2Fe-2S] cluster as a cofactor.

It carries out the reaction (4R,5S)-dethiobiotin + (sulfur carrier)-SH + 2 reduced [2Fe-2S]-[ferredoxin] + 2 S-adenosyl-L-methionine = (sulfur carrier)-H + biotin + 2 5'-deoxyadenosine + 2 L-methionine + 2 oxidized [2Fe-2S]-[ferredoxin]. It functions in the pathway cofactor biosynthesis; biotin biosynthesis; biotin from 7,8-diaminononanoate: step 2/2. In terms of biological role, catalyzes the conversion of dethiobiotin (DTB) to biotin by the insertion of a sulfur atom into dethiobiotin via a radical-based mechanism. In Helicobacter acinonychis (strain Sheeba), this protein is Biotin synthase.